A 139-amino-acid polypeptide reads, in one-letter code: Arsenate reductase (139 aa).

Residues Cys10, Cys82, and Cys89 each act as nucleophile in the active site. 2 disulfides stabilise this stretch: Cys10/Cys82 and Cys82/Cys89.

This sequence belongs to the low molecular weight phosphotyrosine protein phosphatase family. Thioredoxin-coupled ArsC subfamily. As to quaternary structure, monomer.

Its subcellular location is the cytoplasm. The catalysed reaction is arsenate + [thioredoxin]-dithiol + H(+) = arsenite + [thioredoxin]-disulfide + H2O. With respect to regulation, activity is potassium and sulfate-independent. In terms of biological role, catalyzes the reduction of arsenate [As(V)] to arsenite [As(III)]. In vitro, can dephosphorylate para-nitrophenyl phosphate (pNPP). This chain is Arsenate reductase, found in Bacillus subtilis (strain 168).